Consider the following 182-residue polypeptide: Methyl-CpG-binding domain-containing protein 5 (182 aa).

Disordered regions lie at residues 1 to 56 (MSNG…GTVD) and 80 to 126 (HGTP…KPLN). Positions 25–101 (KRATPGDDNW…ENGDSHSEHS (77 aa)) constitute an MBD domain. Over residues 92 to 105 (ENGDSHSEHSEGRG) the composition is skewed to basic and acidic residues. The span at 106–115 (SARRQTKSNK) shows a compositional bias: basic residues.

In terms of assembly, homodimer and heterodimer with MBD6. Interacts with DDM1 via its MBD domain. As to expression, mostly expressed in flowers, and, to a lower extent, in seedlings, buds, stems and mature seeds, but barely in roots, exclusively in root meristem cells at tips (at protein level).

The protein resides in the nucleus. It localises to the chromosome. Its function is as follows. Transcriptional regulator that binds CpG islands in promoters where the DNA is methylated at position 5 of cytosine within CpG dinucleotides. In addition, binds specifically methylated m(5)CpNpN but not m(5)CpNpG (N is A, T or C). Plays probably a role in gene silencing. This is Methyl-CpG-binding domain-containing protein 5 (MBD5) from Arabidopsis thaliana (Mouse-ear cress).